A 107-amino-acid chain; its full sequence is L-rhamnose mutarotase (107 aa).

Residue Tyr-21 coordinates substrate. Residue His-25 is the Proton donor of the active site. Substrate is bound by residues Tyr-44 and 79 to 80 (WW). Positions 88-107 (ETNPDNSPKTNSLKEVFHLD) are disordered. Residues 90-100 (NPDNSPKTNSL) are compositionally biased toward polar residues.

The protein belongs to the rhamnose mutarotase family. As to quaternary structure, homodimer.

The protein resides in the cytoplasm. It carries out the reaction alpha-L-rhamnose = beta-L-rhamnose. It functions in the pathway carbohydrate metabolism; L-rhamnose metabolism. Involved in the anomeric conversion of L-rhamnose. This chain is L-rhamnose mutarotase, found in Flavobacterium johnsoniae (strain ATCC 17061 / DSM 2064 / JCM 8514 / BCRC 14874 / CCUG 350202 / NBRC 14942 / NCIMB 11054 / UW101) (Cytophaga johnsonae).